Consider the following 188-residue polypeptide: UPF0397 protein LACR_0367 (188 aa).

Helical transmembrane passes span 14–34, 48–68, 80–100, 120–140, and 152–172; these read IVVA…LINI, AVLA…IGFI, APWW…GFGV, IVQF…GDIL, and QGVV…TLLL.

It belongs to the UPF0397 family.

Its subcellular location is the cell membrane. In Lactococcus lactis subsp. cremoris (strain SK11), this protein is UPF0397 protein LACR_0367.